A 119-amino-acid polypeptide reads, in one-letter code: Large ribosomal subunit protein bL20c (119 aa).

This sequence belongs to the bacterial ribosomal protein bL20 family.

Its subcellular location is the plastid. It is found in the chloroplast. In terms of biological role, binds directly to 23S ribosomal RNA and is necessary for the in vitro assembly process of the 50S ribosomal subunit. It is not involved in the protein synthesizing functions of that subunit. The sequence is that of Large ribosomal subunit protein bL20c from Lolium perenne (Perennial ryegrass).